We begin with the raw amino-acid sequence, 946 residues long: Inter-alpha-trypsin inhibitor heavy chain H2 (946 aa).

Residues 1–18 (MKRLTCFFICFFLSEVSG) form the signal peptide. Residues 19–54 (FEIPINGLSEFVDYEDLVELAPGKFQLVAENRRYQR) constitute a propeptide that is removed on maturation. Residues 56 to 185 (LPGESEEMME…KVQFELHYQE (130 aa)) enclose the VIT domain. Residue S60 is modified to Phosphoserine; by FAM20C. An N-linked (GlcNAc...) (complex) asparagine glycan is attached at N118. The cysteines at positions 261 and 264 are disulfide-linked. 4-carboxyglutamate is present on residues E282 and E283. A VWFA domain is found at 308-468 (PKNILFVIDV…YDFLKRLSNE (161 aa)). N445 carries an N-linked (GlcNAc...) asparagine glycan. The residue at position 466 (S466) is a Phosphoserine; by FAM20C. A disulfide bridge connects residues C650 and C651. Positions 665–679 (STPSWANPSPTPVIS) are O-glycosylated at three sites. O-linked (GalNAc...) threonine; partial glycosylation occurs at T666. O-linked (GalNAc...) serine glycosylation occurs at S673. T675 and T691 each carry an O-linked (GalNAc...) threonine glycan. D702 is subject to Aspartate 1-(chondroitin 4-sulfate)-ester. Positions 703–946 (PHFIIYLPKS…PQLYSFLKRP (244 aa)) are excised as a propeptide. S886 bears the Phosphoserine; by FAM20C mark.

As to quaternary structure, I-alpha-I plasma protease inhibitors are assembled from one or two heavy chains (HC) and one light chain, bikunin. Inter-alpha-inhibitor (I-alpha-I) is composed of ITIH1/HC1, ITIH2/HC2 and bikunin. Heavy chains are linked to bikunin via chondroitin 4-sulfate esterified to the alpha-carboxyl of the C-terminal aspartate after propeptide cleavage. Post-translationally, N- and O-glycosylated. O-glycosylated with core 1 or possibly core 8 glycans. In terms of processing, phosphorylated by FAM20C in the extracellular medium. In terms of tissue distribution, plasma.

Its subcellular location is the secreted. May act as a carrier of hyaluronan in serum or as a binding protein between hyaluronan and other matrix protein, including those on cell surfaces in tissues to regulate the localization, synthesis and degradation of hyaluronan which are essential to cells undergoing biological processes. The polypeptide is Inter-alpha-trypsin inhibitor heavy chain H2 (ITIH2) (Homo sapiens (Human)).